Reading from the N-terminus, the 307-residue chain is Protoheme IX farnesyltransferase (307 aa).

The next 8 membrane-spanning stretches (helical) occupy residues 38–58 (NTLT…LSVL), 65–85 (FFTI…NNYI), 108–128 (PGFA…FLLL), 131–151 (PMAV…YSLW), 158–178 (LNTV…WAAI), 186–206 (IAWM…LALA), 251–271 (LGIT…VLGF), and 287–307 (FVYS…VTFF).

Belongs to the UbiA prenyltransferase family. Protoheme IX farnesyltransferase subfamily. In terms of assembly, interacts with CtaA.

Its subcellular location is the cell membrane. The enzyme catalyses heme b + (2E,6E)-farnesyl diphosphate + H2O = Fe(II)-heme o + diphosphate. The protein operates within porphyrin-containing compound metabolism; heme O biosynthesis; heme O from protoheme: step 1/1. Its function is as follows. Converts heme B (protoheme IX) to heme O by substitution of the vinyl group on carbon 2 of heme B porphyrin ring with a hydroxyethyl farnesyl side group. The protein is Protoheme IX farnesyltransferase of Bacillus thuringiensis (strain Al Hakam).